A 364-amino-acid polypeptide reads, in one-letter code: MMSKTYHIAVLPGDGIGPEVMAQAYKILDAVRQRFNVRISTSEYDVGGAAIDRQGSPLPAGTVAGCEQADAILFGSVGGPKWEHLPAAEQPERGALLPLRKHFKLFSNLRPSRLYPGLEAYCPLRANIAERGFDILCVRELTGGIYFGQPKGREGTGPHEHAFDTEVYYRFEIERIARIAFESARKRRGKVTSIDKANVLQSSILWRKVVSQVAPDYPDVALSHLYIDNATMQLIKDPSQFDVMLCSNLFGDILSDECAMITGSMGMLPSASLNEQGFGMYEPAGGSAPDIAGKDIANPVAQILSASLLLRYSLGLDDAADAIELAVNQALEAGHRTADLAGGGSAVGTGEMGDIIAALISQGA.

Residue 79-92 participates in NAD(+) binding; that stretch reads GPKWEHLPAAEQPE. Substrate-binding residues include arginine 100, arginine 110, arginine 139, and aspartate 228. Mg(2+) is bound by residues aspartate 228, aspartate 252, and aspartate 256. 286–298 is an NAD(+) binding site; it reads GSAPDIAGKDIAN.

It belongs to the isocitrate and isopropylmalate dehydrogenases family. LeuB type 1 subfamily. In terms of assembly, homodimer. It depends on Mg(2+) as a cofactor. Mn(2+) is required as a cofactor.

Its subcellular location is the cytoplasm. It catalyses the reaction (2R,3S)-3-isopropylmalate + NAD(+) = 4-methyl-2-oxopentanoate + CO2 + NADH. It functions in the pathway amino-acid biosynthesis; L-leucine biosynthesis; L-leucine from 3-methyl-2-oxobutanoate: step 3/4. Its function is as follows. Catalyzes the oxidation of 3-carboxy-2-hydroxy-4-methylpentanoate (3-isopropylmalate) to 3-carboxy-4-methyl-2-oxopentanoate. The product decarboxylates to 4-methyl-2 oxopentanoate. This Sodalis glossinidius (strain morsitans) protein is 3-isopropylmalate dehydrogenase.